The following is a 255-amino-acid chain: Triosephosphate isomerase (255 aa).

Substrate is bound at residue 9–11 (NWK). Catalysis depends on H100, which acts as the Electrophile. The Proton acceptor role is filled by E169. Substrate contacts are provided by residues G175, S208, and 229-230 (GG).

This sequence belongs to the triosephosphate isomerase family. In terms of assembly, homodimer.

It localises to the cytoplasm. It catalyses the reaction D-glyceraldehyde 3-phosphate = dihydroxyacetone phosphate. It functions in the pathway carbohydrate biosynthesis; gluconeogenesis. Its pathway is carbohydrate degradation; glycolysis; D-glyceraldehyde 3-phosphate from glycerone phosphate: step 1/1. Involved in the gluconeogenesis. Catalyzes stereospecifically the conversion of dihydroxyacetone phosphate (DHAP) to D-glyceraldehyde-3-phosphate (G3P). This is Triosephosphate isomerase from Synechococcus sp. (strain JA-3-3Ab) (Cyanobacteria bacterium Yellowstone A-Prime).